Reading from the N-terminus, the 393-residue chain is Acetate kinase (393 aa).

Residue asparagine 6 coordinates Mg(2+). Lysine 13 provides a ligand contact to ATP. Residue arginine 87 participates in substrate binding. Aspartate 143 (proton donor/acceptor) is an active-site residue. ATP contacts are provided by residues 203–207 (HLGNG), 278–280 (DMR), and 326–330 (GIGEN). Mg(2+) is bound at residue glutamate 380.

It belongs to the acetokinase family. As to quaternary structure, homodimer. It depends on Mg(2+) as a cofactor. Requires Mn(2+) as cofactor.

The protein resides in the cytoplasm. It carries out the reaction acetate + ATP = acetyl phosphate + ADP. It functions in the pathway metabolic intermediate biosynthesis; acetyl-CoA biosynthesis; acetyl-CoA from acetate: step 1/2. Its function is as follows. Catalyzes the formation of acetyl phosphate from acetate and ATP. Can also catalyze the reverse reaction. The sequence is that of Acetate kinase from Mycoplasma capricolum subsp. capricolum (strain California kid / ATCC 27343 / NCTC 10154).